The sequence spans 143 residues: Large ribosomal subunit protein uL13 (143 aa).

The protein belongs to the universal ribosomal protein uL13 family. In terms of assembly, part of the 50S ribosomal subunit.

This protein is one of the early assembly proteins of the 50S ribosomal subunit, although it is not seen to bind rRNA by itself. It is important during the early stages of 50S assembly. This Methanosarcina acetivorans (strain ATCC 35395 / DSM 2834 / JCM 12185 / C2A) protein is Large ribosomal subunit protein uL13.